The primary structure comprises 196 residues: ATP-dependent Clp protease proteolytic subunit (196 aa).

The Nucleophile role is filled by serine 101. Histidine 126 is a catalytic residue.

It belongs to the peptidase S14 family. In terms of assembly, component of the chloroplastic Clp protease core complex.

The protein localises to the plastid. It localises to the chloroplast stroma. It carries out the reaction Hydrolysis of proteins to small peptides in the presence of ATP and magnesium. alpha-casein is the usual test substrate. In the absence of ATP, only oligopeptides shorter than five residues are hydrolyzed (such as succinyl-Leu-Tyr-|-NHMec, and Leu-Tyr-Leu-|-Tyr-Trp, in which cleavage of the -Tyr-|-Leu- and -Tyr-|-Trp bonds also occurs).. Its function is as follows. Cleaves peptides in various proteins in a process that requires ATP hydrolysis. Has a chymotrypsin-like activity. Plays a major role in the degradation of misfolded proteins. The polypeptide is ATP-dependent Clp protease proteolytic subunit (Coffea arabica (Arabian coffee)).